Here is a 459-residue protein sequence, read N- to C-terminus: Cysteine--tRNA ligase (459 aa).

Residue cysteine 31 participates in Zn(2+) binding. The 'HIGH' region motif lies at 33–43; that stretch reads PTVYDNPHIGN. Zn(2+) is bound by residues cysteine 216, histidine 241, and glutamate 245. Positions 274–278 match the 'KMSKS' region motif; it reads KMSKS. Lysine 277 contributes to the ATP binding site.

The protein belongs to the class-I aminoacyl-tRNA synthetase family. As to quaternary structure, monomer. Requires Zn(2+) as cofactor.

The protein localises to the cytoplasm. The enzyme catalyses tRNA(Cys) + L-cysteine + ATP = L-cysteinyl-tRNA(Cys) + AMP + diphosphate. The sequence is that of Cysteine--tRNA ligase from Rickettsia felis (strain ATCC VR-1525 / URRWXCal2) (Rickettsia azadi).